Reading from the N-terminus, the 432-residue chain is Enolase (432 aa).

Q163 is a binding site for (2R)-2-phosphoglycerate. The active-site Proton donor is E205. Mg(2+) contacts are provided by D242, E287, and D314. (2R)-2-phosphoglycerate contacts are provided by K339, R368, S369, and K390. The Proton acceptor role is filled by K339.

The protein belongs to the enolase family. Mg(2+) is required as a cofactor.

It is found in the cytoplasm. Its subcellular location is the secreted. The protein localises to the cell surface. It carries out the reaction (2R)-2-phosphoglycerate = phosphoenolpyruvate + H2O. It functions in the pathway carbohydrate degradation; glycolysis; pyruvate from D-glyceraldehyde 3-phosphate: step 4/5. Its function is as follows. Catalyzes the reversible conversion of 2-phosphoglycerate (2-PG) into phosphoenolpyruvate (PEP). It is essential for the degradation of carbohydrates via glycolysis. This is Enolase from Myxococcus xanthus (strain DK1622).